The sequence spans 320 residues: Glutaminyl-peptide cyclotransferase (320 aa).

The segment covering Met1–Lys12 has biased composition (basic residues). Residues Met1 to Ser22 form a disordered region. Residues Met1–Arg36 lie on the Cytoplasmic side of the membrane. Residues Phe37–Phe57 form a helical; Signal-anchor for type II membrane protein membrane-spanning segment. Residues Asn58–Val320 are Lumenal-facing. N-linked (GlcNAc...) asparagine glycans are attached at residues Asn99 and Asn163.

This sequence belongs to the plant glutaminyl-peptide cyclotransferase family. In terms of processing, glycosylated.

It is found in the endoplasmic reticulum membrane. The enzyme catalyses N-terminal L-glutaminyl-[peptide] = N-terminal 5-oxo-L-prolyl-[peptide] + NH4(+). Converts glutamine and N-terminal glutamyl residues in peptides to 5-oxoproline and 5-oxoproline residues. Not involved in the major pathway for 5-oxoproline production. This chain is Glutaminyl-peptide cyclotransferase (QCT), found in Arabidopsis thaliana (Mouse-ear cress).